The following is a 308-amino-acid chain: MTPCLLIAGPTAAGKTALSLAAAERVGGEIINADSMQVYAGLPLITAQPDAAERARAPHHLFGSIDPAIRYSVGQWTSDVLALISDIRGRGNVPILVGGTGLYFNALTRGLAPVPEIGDAARARAAALLDADGLAGLRAEALRLDPVATNRVDAADRQRLLRIVEVGFETGTALSVFQADTVPPLEPAAWRGIVIEPDREALYRRIDQRFEHMLEAGALDEVAAFMQRDLDPDLPASKALGVPPLIAHLRGEMSLDEARDNAKRDSRRYAKRQGTWFRNQAASWSRIGTLDSEAAISALADILDQPPG.

9 to 16 (GPTAAGKT) contacts ATP. 11-16 (TAAGKT) contacts substrate. Interaction with substrate tRNA stretches follow at residues 34–37 (DSMQ) and 158–162 (QRLLR).

The protein belongs to the IPP transferase family. As to quaternary structure, monomer. The cofactor is Mg(2+).

It catalyses the reaction adenosine(37) in tRNA + dimethylallyl diphosphate = N(6)-dimethylallyladenosine(37) in tRNA + diphosphate. Catalyzes the transfer of a dimethylallyl group onto the adenine at position 37 in tRNAs that read codons beginning with uridine, leading to the formation of N6-(dimethylallyl)adenosine (i(6)A). The chain is tRNA dimethylallyltransferase from Maricaulis maris (strain MCS10) (Caulobacter maris).